A 467-amino-acid polypeptide reads, in one-letter code: Glutamate--tRNA ligase (467 aa).

Residues P13 to G23 carry the 'HIGH' region motif. Over residues A118–P133 the composition is skewed to basic and acidic residues. Positions A118–P141 are disordered. The 'KMSKS' region signature appears at K245–R249. Residue K248 coordinates ATP.

It belongs to the class-I aminoacyl-tRNA synthetase family. Glutamate--tRNA ligase type 1 subfamily. Monomer.

The protein resides in the cytoplasm. It carries out the reaction tRNA(Glu) + L-glutamate + ATP = L-glutamyl-tRNA(Glu) + AMP + diphosphate. Functionally, catalyzes the attachment of glutamate to tRNA(Glu) in a two-step reaction: glutamate is first activated by ATP to form Glu-AMP and then transferred to the acceptor end of tRNA(Glu). This is Glutamate--tRNA ligase from Bordetella avium (strain 197N).